Reading from the N-terminus, the 361-residue chain is Versatile peroxidase VPL2 (361 aa).

The N-terminal stretch at 1 to 22 is a signal peptide; the sequence is MSFKTLSALALALGAAVQFASA. Residues 23–30 constitute a propeptide that is removed on maturation; it reads AVPLVQKR. 4 disulfides stabilise this stretch: C33-C45, C44-C308, C64-C144, and C272-C337. 2 residues coordinate Mn(2+): E66 and E70. H77 (proton acceptor) is an active-site residue. 4 residues coordinate Ca(2+): D78, G90, D92, and S94. Residue N126 is glycosylated (N-linked (GlcNAc...) asparagine). W194 acts as the Tryptophan radical intermediate in catalysis. A heme b-binding site is contributed by H199. S200 is a binding site for Ca(2+). 203 to 207 is a binding site for heme b; sequence AADKV. D205 is a Mn(2+) binding site. Residues D217, T219, V222, and D224 each contribute to the Ca(2+) site.

It belongs to the peroxidase family. Ligninase subfamily. The cofactor is heme b. Ca(2+) is required as a cofactor.

The protein resides in the secreted. It carries out the reaction 1-(4-hydroxy-3-methoxyphenyl)-2-(2-methoxyphenoxy)propane-1,3-diol + H2O2 = guaiacol + vanillin + glycolaldehyde + H2O. It catalyses the reaction 2 Mn(2+) + H2O2 + 2 H(+) = 2 Mn(3+) + 2 H2O. A versatile ligninolytic peroxidase that combines the substrate specificity characteristics of the two other ligninolytic peroxidases, manganese peroxidase and lignin peroxidase. In Pleurotus eryngii (Boletus of the steppes), this protein is Versatile peroxidase VPL2 (vpl2).